The primary structure comprises 515 residues: MNTHNARDSDDESPLESEEHLKRFFAGRNLYSQTKIDDARKKSHDAKYAKEVEWDAKDTAKGKPVFKKYRQEIADKTSRCDAQFINNLHTYYGNGSELRELPETHYAVDFMGTTIATTEMTAELKKLKVLKKKTATSQFVREHRQLGFIPTPSRRSLSCTGRFMNFETKCDERPDRTNPEFSVGNNNFLSATISNLDEDFKTPSNCEHVASIVPKEISNALTALIPHVNVFDYEKGEMEIGKVLCSNKNLHAYVIPKQHDQEQMLKDFSARFLAWYNKLSHLQRDTFGTDKDPKRSGKQEDGKPMKPYFWRVNVILCLQEFQEEGTMFRRARHVCGIRPHKSQPGLDLYIEIDTGSMRALKTNYLTVRKLPQEFANVPTPILEVRFEGAKTEEDVARRIAHIRKTGRAYIKSFDTGKRKIYQNSFFNGQPKDWSNIETAVLLPPKESSMSKLFCEDRDCMGLCCTDQWLENAESSPGISTIPASWIADKNKKPFVDRSPQKFKFPASGSYMKPAN.

The disordered stretch occupies residues 496–515 (DRSPQKFKFPASGSYMKPAN).

As to quaternary structure, may interact with pid-2, app-1 and prmt-5.

It is found in the cytoplasm. The protein resides in the perinuclear region. It localises to the P-body. Functionally, together with pid-5, it is involved in gene silencing mediated by a class of 21 nucleotide PIWI-interacting RNAs (piRNAs) that possess a uracil residue at the 5'-end (also called 21U-RNAs) and guide the Piwi protein prg-1 to its DNA targets for silencing. Together with pid-5, it is required for the biogenesis of secondary and tertiary 22G-siRNAs. Specifically, promotes the production of 22G-siRNAs from the 5' end of target mRNAs. Together with pid-5, plays a role in small RNA-directed transgenerational epigenetic inheritance (also called RNAe) over several generations and germline immortality. Together with pid-5, plays a role in the formation of liquid-like condensates in the cytoplasm called Z granules. The protein is Protein pid-4 of Caenorhabditis elegans.